Reading from the N-terminus, the 505-residue chain is UDP-N-acetylglucosamine diphosphorylase 1 (505 aa).

Basic and acidic residues predominate over residues 1–10; the sequence is MIEPSMEREN. Residues 1–32 are disordered; that stretch reads MIEPSMERENGALTAATTTTTAVTSPPPMASS. Residues 14–24 are compositionally biased toward low complexity; it reads TAATTTTTAVT. The Substrate binding motif lies at 134–137; it reads LSGG. Substrate is bound at residue Asn253. The Substrate binding motif lies at 335-336; sequence EY. Lys432 contributes to the substrate binding site.

It belongs to the UDPGP type 1 family. As to quaternary structure, monomer. Requires Mg(2+) as cofactor. Mn(2+) serves as cofactor. Expressed in root tips, stipules and mature pollen grains.

The catalysed reaction is N-acetyl-alpha-D-glucosamine 1-phosphate + UTP + H(+) = UDP-N-acetyl-alpha-D-glucosamine + diphosphate. It carries out the reaction N-acetyl-alpha-D-galactosamine 1-phosphate + UTP + H(+) = UDP-N-acetyl-alpha-D-galactosamine + diphosphate. It participates in nucleotide-sugar biosynthesis; UDP-N-acetyl-alpha-D-glucosamine biosynthesis; UDP-N-acetyl-alpha-D-glucosamine from N-acetyl-alpha-D-glucosamine 1-phosphate: step 1/1. Its activity is regulated as follows. Inhibited by hygromycin and streptomycin, but not by gentamycin or kanamycin. Uridylyltransferase involved in the biosynthesis of UDP-glucosamine, an essential precursor for glycoprotein and glycolipid synthesis. Can use both UDP-glucosamine and the 4-epimer UDP-galactosamine as substrates, but no other sugars or NTPs. Acts redundantly with GLCNAC1PUT2. Required for gametogenesis and embryo development. The protein is UDP-N-acetylglucosamine diphosphorylase 1 (GLCNAC1PUT1) of Arabidopsis thaliana (Mouse-ear cress).